The following is a 372-amino-acid chain: Glutamate 5-kinase (372 aa).

Lysine 14 lines the ATP pocket. The substrate site is built by serine 54, aspartate 141, and asparagine 153. ATP contacts are provided by residues 173–174 (TD) and 215–221 (TGGMATK). The PUA domain occupies 280-358 (RGQLVIDAGA…DSIEEVLGYD (79 aa)).

It belongs to the glutamate 5-kinase family.

It localises to the cytoplasm. It carries out the reaction L-glutamate + ATP = L-glutamyl 5-phosphate + ADP. Its pathway is amino-acid biosynthesis; L-proline biosynthesis; L-glutamate 5-semialdehyde from L-glutamate: step 1/2. In terms of biological role, catalyzes the transfer of a phosphate group to glutamate to form L-glutamate 5-phosphate. The chain is Glutamate 5-kinase from Shewanella pealeana (strain ATCC 700345 / ANG-SQ1).